The sequence spans 180 residues: FMN reductase (NADH) RutF (180 aa).

Belongs to the non-flavoprotein flavin reductase family. RutF subfamily.

The enzyme catalyses FMNH2 + NAD(+) = FMN + NADH + 2 H(+). Functionally, catalyzes the reduction of FMN to FMNH2 which is used to reduce pyrimidine by RutA via the Rut pathway. In Bradyrhizobium diazoefficiens (strain JCM 10833 / BCRC 13528 / IAM 13628 / NBRC 14792 / USDA 110), this protein is FMN reductase (NADH) RutF.